The following is a 687-amino-acid chain: MALLLVSLLAFLSLGSGCHHQVCHYSNRVFLCQESKVTEIPSDLPRNALELRFVLTKLRVIPKGAFSGFGDLKKIEISQNDVLEVIEANVFSNLPKLHEIRIEKANNLLYIDHDAFQNLPNLQYLLISNTGIKHLPAVHKIQSLQKVLLDIQDNINIHIVERNSFMGLSFESMILRLSKNGIQEIHNCAFNGTQLDELNLSDNNNLEELPNDVFQGASGPVILDISGTRIHSLPNYGLENLKKLRARSTYNLKKLPSLEKFVALMEASLTYPSHCCAFANWRQQTSELQTTCNKSILRQEVDMTQARGERVSLAEDDESMMYSEFDYDLCNEVVDVTCSPKPDAFNPCEDIMGYDILRVLIWFISILAITGNIIVLVILITSQYKLTVPRFLMCNLAFADLCIGIYLLLIASVDIHTKSQYHNYAIDWQTGAGCDAAGFFTVFGSELSVYTLTAITLERWHTITHAMQLECKVQLRHAASVMLVGWIFGFGVGLLPIFGISTYMKVSICLPMDIDSPLSQLYVMSLLVLNVLAFVVICGCYTHIYLTVRNPNIVSSSSDTKIAKRMGILIFTDFLCMAPISFFGISASLKVALITVSKSKILLVLFYPINSCANPFLYAIFTKNFRRDFFILLSKFGCYEMQAQTYRTETSSTGHISHPKNGPCPPTPRVTNGANCTLVPLSHLAQN.

A signal peptide spans 1–17; that stretch reads MALLLVSLLAFLSLGSG. Residues 18 to 46 enclose the LRRNT domain; it reads CHHQVCHYSNRVFLCQESKVTEIPSDLPR. The Extracellular segment spans residues 18 to 358; sequence CHHQVCHYSN…EDIMGYDILR (341 aa). The cysteines at positions 23 and 32 are disulfide-linked. 9 LRR repeats span residues 49-72, 73-97, 98-118, 119-143, 144-169, 170-192, 193-216, 217-240, and 241-259; these read LELR…FGDL, KKIE…LPKL, HEIR…AFQN, LPNL…KIQS, LQKV…MGLS, FESM…AFNG, TQLD…VFQG, ASGP…GLEN, and LKKL…PSLE. Residues asparagine 191 and asparagine 199 are each glycosylated (N-linked (GlcNAc...) asparagine). Intrachain disulfides connect cysteine 275–cysteine 338, cysteine 276–cysteine 292, cysteine 276–cysteine 348, and cysteine 292–cysteine 330. N-linked (GlcNAc...) asparagine glycosylation is present at asparagine 293. At tyrosine 327 the chain carries Sulfotyrosine. Residues 359 to 379 form a helical membrane-spanning segment; sequence VLIWFISILAITGNIIVLVIL. The Cytoplasmic portion of the chain corresponds to 380–390; the sequence is ITSQYKLTVPR. The chain crosses the membrane as a helical span at residues 391–413; that stretch reads FLMCNLAFADLCIGIYLLLIASV. Over 414 to 435 the chain is Extracellular; it reads DIHTKSQYHNYAIDWQTGAGCD. A disulfide bond links cysteine 434 and cysteine 509. Residues 436-457 form a helical membrane-spanning segment; sequence AAGFFTVFGSELSVYTLTAITL. Residues 458–477 are Cytoplasmic-facing; the sequence is ERWHTITHAMQLECKVQLRH. Residues 478 to 500 traverse the membrane as a helical segment; sequence AASVMLVGWIFGFGVGLLPIFGI. The Extracellular segment spans residues 501–520; the sequence is STYMKVSICLPMDIDSPLSQ. Residues 521 to 542 form a helical membrane-spanning segment; it reads LYVMSLLVLNVLAFVVICGCYT. Residues 543–565 lie on the Cytoplasmic side of the membrane; it reads HIYLTVRNPNIVSSSSDTKIAKR. The chain crosses the membrane as a helical span at residues 566-589; sequence MGILIFTDFLCMAPISFFGISASL. The Extracellular segment spans residues 590–600; that stretch reads KVALITVSKSK. A helical transmembrane segment spans residues 601 to 622; it reads ILLVLFYPINSCANPFLYAIFT. Residues 623 to 687 lie on the Cytoplasmic side of the membrane; sequence KNFRRDFFIL…LVPLSHLAQN (65 aa).

The protein belongs to the G-protein coupled receptor 1 family. FSH/LSH/TSH subfamily. Homotrimer. Functions as a homotrimer binding the FSH hormone heterodimer composed of CGA and FSHB. Interacts with ARRB2. Interacts with APPL2; interaction is independent of follicle stimulating hormone stimulation. N-glycosylated; indirectly required for FSH-binding, possibly via a conformational change that allows high affinity binding of hormone. In terms of processing, sulfated.

The protein resides in the cell membrane. Functionally, g protein-coupled receptor for follitropin, the follicle-stimulating hormone. Through cAMP production activates the downstream PI3K-AKT and ERK1/ERK2 signaling pathways. The polypeptide is Follicle-stimulating hormone receptor (FSHR) (Equus asinus (Donkey)).